The primary structure comprises 175 residues: Alpha-crystallin B chain (175 aa).

Methionine 1 is modified (N-acetylmethionine). Phosphoserine is present on serine 19. Residue serine 41 is glycosylated (O-linked (GlcNAc) serine). 2 positions are modified to phosphoserine: serine 45 and serine 59. The sHSP domain occupies 56–164 (RAPSWIDTGL…PERTIPITRE (109 aa)). A Zn(2+)-binding site is contributed by histidine 83. Lysine 92 carries the N6-acetyllysine modification. Positions 104, 106, 111, and 119 each coordinate Zn(2+). Positions 142 to 175 (VLTVNGPRRQASGPERTIPITREEKPAVTAAPKK) are disordered. N6-acetyllysine is present on lysine 166. The O-linked (GlcNAc) threonine glycan is linked to threonine 170.

It belongs to the small heat shock protein (HSP20) family. Heteromer composed of three CRYAA and one CRYAB subunits. Aggregates with homologous proteins, including the small heat shock protein HSPB1, to form large heteromeric complexes. Inter-subunit bridging via zinc ions enhances stability, which is crucial as there is no protein turn over in the lens. Interacts with HSPBAP1 and TTN/titin. Interacts with TMEM109; in the cellular response to DNA damage. Interacts with DES; binds rapidly during early stages of DES filament assembly and a reduced binding seen in the later stages. Interacts with TMED10; the interaction mediates the translocation from the cytoplasm into the ERGIC (endoplasmic reticulum-Golgi intermediate compartment) and thereby secretion. Interacts with ATP6V1A and with MTOR, forming a ternary complex.

Its subcellular location is the cytoplasm. It is found in the nucleus. It localises to the secreted. The protein localises to the lysosome. Functionally, may contribute to the transparency and refractive index of the lens. Has chaperone-like activity, preventing aggregation of various proteins under a wide range of stress conditions. In lens epithelial cells, stabilizes the ATP6V1A protein, preventing its degradation by the proteasome. The protein is Alpha-crystallin B chain (CRYAB) of Sus scrofa (Pig).